Reading from the N-terminus, the 426-residue chain is Serine hydroxymethyltransferase (426 aa).

Residues Leu-118 and 122-124 (GHL) contribute to the (6S)-5,6,7,8-tetrahydrofolate site. An N6-(pyridoxal phosphate)lysine modification is found at Lys-227.

This sequence belongs to the SHMT family. In terms of assembly, homodimer. Pyridoxal 5'-phosphate is required as a cofactor.

It is found in the cytoplasm. The enzyme catalyses (6R)-5,10-methylene-5,6,7,8-tetrahydrofolate + glycine + H2O = (6S)-5,6,7,8-tetrahydrofolate + L-serine. It participates in one-carbon metabolism; tetrahydrofolate interconversion. The protein operates within amino-acid biosynthesis; glycine biosynthesis; glycine from L-serine: step 1/1. In terms of biological role, catalyzes the reversible interconversion of serine and glycine with tetrahydrofolate (THF) serving as the one-carbon carrier. This reaction serves as the major source of one-carbon groups required for the biosynthesis of purines, thymidylate, methionine, and other important biomolecules. Also exhibits THF-independent aldolase activity toward beta-hydroxyamino acids, producing glycine and aldehydes, via a retro-aldol mechanism. This chain is Serine hydroxymethyltransferase, found in Mycolicibacterium paratuberculosis (strain ATCC BAA-968 / K-10) (Mycobacterium paratuberculosis).